A 1058-amino-acid polypeptide reads, in one-letter code: Protein HIR1 (1058 aa).

WD repeat units follow at residues Gln15–Lys54, Thr82–Lys121, Ala142–Arg181, Ala184–Val223, Pro239–Ser282, Asp319–Val364, and Met368–Ser409. Positions Ile49–Gly73 are disordered. A disordered region spans residues Ala307 to Val327. Disordered stretches follow at residues Leu500–Thr536, Arg591–Arg610, Arg651–Lys696, and Ser1023–Gln1058. Polar residues-rich tracts occupy residues Glu661–His678 and Gly687–Lys696. Over residues His1046–Gln1058 the composition is skewed to basic and acidic residues.

The protein belongs to the WD repeat HIR1 family.

It localises to the nucleus. Its function is as follows. Required for replication-independent chromatin assembly and for the periodic repression of histone gene transcription during the cell cycle. The sequence is that of Protein HIR1 (HIR1) from Yarrowia lipolytica (strain CLIB 122 / E 150) (Yeast).